We begin with the raw amino-acid sequence, 297 residues long: Homoserine kinase (297 aa).

79-89 (PIARGLGSSGA) provides a ligand contact to ATP.

The protein belongs to the GHMP kinase family. Homoserine kinase subfamily.

The protein localises to the cytoplasm. It catalyses the reaction L-homoserine + ATP = O-phospho-L-homoserine + ADP + H(+). The protein operates within amino-acid biosynthesis; L-threonine biosynthesis; L-threonine from L-aspartate: step 4/5. Functionally, catalyzes the ATP-dependent phosphorylation of L-homoserine to L-homoserine phosphate. This Pyrobaculum aerophilum (strain ATCC 51768 / DSM 7523 / JCM 9630 / CIP 104966 / NBRC 100827 / IM2) protein is Homoserine kinase.